Reading from the N-terminus, the 285-residue chain is 4-hydroxybenzoate octaprenyltransferase (285 aa).

7 consecutive transmembrane segments (helical) span residues 33-53 (FLAADGIPDWHVLIVFILGVV), 93-113 (LILFSVLVTCSFILVLTMNTL), 134-154 (ITYLPQFVLGLAFSWAIPMAY), 166-186 (WLLFVINAVWTIAYDTQYAMV), 209-229 (LMIGLLQLTVLTLLIALGIQL), 233-253 (SLYNWGVLAAAGCFVYQQWLI), and 265-285 (FLNNNYVGGFIFVAISASVLI).

This sequence belongs to the UbiA prenyltransferase family. Mg(2+) serves as cofactor.

Its subcellular location is the cell inner membrane. The enzyme catalyses all-trans-octaprenyl diphosphate + 4-hydroxybenzoate = 4-hydroxy-3-(all-trans-octaprenyl)benzoate + diphosphate. The protein operates within cofactor biosynthesis; ubiquinone biosynthesis. Functionally, catalyzes the prenylation of para-hydroxybenzoate (PHB) with an all-trans polyprenyl group. Mediates the second step in the final reaction sequence of ubiquinone-8 (UQ-8) biosynthesis, which is the condensation of the polyisoprenoid side chain with PHB, generating the first membrane-bound Q intermediate 3-octaprenyl-4-hydroxybenzoate. This is 4-hydroxybenzoate octaprenyltransferase from Aliivibrio salmonicida (strain LFI1238) (Vibrio salmonicida (strain LFI1238)).